Reading from the N-terminus, the 720-residue chain is Calpain-12 (720 aa).

The Calpain catalytic domain occupies L45–S341. Active-site residues include C105, H259, and N283. The segment at P342–A541 is domain III. Over residues D393 to G403 the composition is skewed to acidic residues. The tract at residues D393–G415 is disordered. Residues L542–S720 are domain IV. Residues G621 to H656 form the EF-hand domain. Ca(2+) is bound by residues D634, D636, S638, T640, and E645.

This sequence belongs to the peptidase C2 family. Expression localized to the cortex of the hair follicle during the anagen phase of hair cycle.

Its function is as follows. Calcium-regulated non-lysosomal thiol-protease. The protein is Calpain-12 (Capn12) of Mus musculus (Mouse).